Reading from the N-terminus, the 228-residue chain is MKKKAVILLSGGPDSTTVLEIVSKMDYEIYALSFNYHRRNSPEVQKIQGLIKDYNVKQHRVINIDLQSFIGSALTDDNIDVPKFKHTDQLPSDIPVTYVPARNTIFLSYALGVAEVIGARDIFIGVHTNDYTNYPDCRPEYIKSFEAMANLATRVGVNGEKITIHAPLINMTKEQIIKKGLELGVDYSKTISCYDPTEAGLSCGQCLSCIARLDAFKKNNVQDPIKYV.

Residue L9 to L19 participates in ATP binding. Zn(2+) is bound by residues C193, C203, C206, and C209.

Belongs to the QueC family. Zn(2+) is required as a cofactor.

It catalyses the reaction 7-carboxy-7-deazaguanine + NH4(+) + ATP = 7-cyano-7-deazaguanine + ADP + phosphate + H2O + H(+). Its pathway is purine metabolism; 7-cyano-7-deazaguanine biosynthesis. In terms of biological role, catalyzes the ATP-dependent conversion of 7-carboxy-7-deazaguanine (CDG) to 7-cyano-7-deazaguanine (preQ(0)). This is 7-cyano-7-deazaguanine synthase from Rickettsia massiliae (strain Mtu5).